We begin with the raw amino-acid sequence, 264 residues long: Thymidylate synthase (264 aa).

R21 contributes to the dUMP binding site. Position 51 (H51) interacts with (6R)-5,10-methylene-5,6,7,8-tetrahydrofolate. R126–R127 is a binding site for dUMP. Residue C146 is the Nucleophile of the active site. Residues R166–D169, N177, and H207–Y209 contribute to the dUMP site. Residue D169 coordinates (6R)-5,10-methylene-5,6,7,8-tetrahydrofolate. Residue A263 coordinates (6R)-5,10-methylene-5,6,7,8-tetrahydrofolate.

The protein belongs to the thymidylate synthase family. Bacterial-type ThyA subfamily. As to quaternary structure, homodimer.

The protein localises to the cytoplasm. The enzyme catalyses dUMP + (6R)-5,10-methylene-5,6,7,8-tetrahydrofolate = 7,8-dihydrofolate + dTMP. It participates in pyrimidine metabolism; dTTP biosynthesis. Catalyzes the reductive methylation of 2'-deoxyuridine-5'-monophosphate (dUMP) to 2'-deoxythymidine-5'-monophosphate (dTMP) while utilizing 5,10-methylenetetrahydrofolate (mTHF) as the methyl donor and reductant in the reaction, yielding dihydrofolate (DHF) as a by-product. This enzymatic reaction provides an intracellular de novo source of dTMP, an essential precursor for DNA biosynthesis. The chain is Thymidylate synthase from Aeromonas salmonicida (strain A449).